Reading from the N-terminus, the 317-residue chain is Olfactory receptor 2F2 (317 aa).

The Extracellular portion of the chain corresponds to 1-25 (MEIDNQTWVREFILLGLSSDWCTQI). Asn5 is a glycosylation site (N-linked (GlcNAc...) asparagine). A helical transmembrane segment spans residues 26 to 49 (SLFSLFLVTYLMTVLGNCLIVLLI). The Cytoplasmic segment spans residues 50–57 (RLDSRLHT). Residues 58–79 (PMYFFLTNLSLVDVSYATSVVP) traverse the membrane as a helical segment. Topologically, residues 80–100 (QLLAHFLAEHKAIPFQSCAAQ) are extracellular. Cys97 and Cys189 are oxidised to a cystine. A helical transmembrane segment spans residues 101–120 (LFFSLALGGIEFVLLAVMAY). Topologically, residues 121 to 139 (DRHVAVSDRLRYSAIMHGG) are cytoplasmic. A helical transmembrane segment spans residues 140–158 (LCARLAITSWVSGSINSLV). Over 159–195 (QTAITFQLPMCTNKFIDHISCELLAVVRLACVDTSSN) the chain is Extracellular. A helical transmembrane segment spans residues 196-219 (EAAIMVSSIVLLMTPFCLVLLSYI). Residues 220-236 (RIISTILKIQSREGRKK) lie on the Cytoplasmic side of the membrane. The chain crosses the membrane as a helical span at residues 237 to 259 (AFHTCASHLTVVALCYGTTIFTY). Residues 260–272 (IQPHSGPSVLQEK) lie on the Extracellular side of the membrane. The chain crosses the membrane as a helical span at residues 273–292 (LISVFYAIVMPLLNPVIYSL). At 293-317 (RNKEVKGAWHKLLEKFSGLTSKLGT) the chain is on the cytoplasmic side.

The protein belongs to the G-protein coupled receptor 1 family.

It is found in the cell membrane. Odorant receptor. The polypeptide is Olfactory receptor 2F2 (OR2F2) (Homo sapiens (Human)).